Reading from the N-terminus, the 354-residue chain is Tryptophan--tRNA ligase (354 aa).

ATP-binding positions include 13 to 15 (QPT) and 21 to 22 (GN). The 'HIGH' region motif lies at 14 to 22 (PTGNLHLGN). Aspartate 137 is an L-tryptophan binding site. Residues 149 to 151 (GDD), valine 208, and 217 to 221 (KMSKS) each bind ATP. Residues 217–221 (KMSKS) carry the 'KMSKS' region motif.

This sequence belongs to the class-I aminoacyl-tRNA synthetase family. As to quaternary structure, homodimer.

Its subcellular location is the cytoplasm. The enzyme catalyses tRNA(Trp) + L-tryptophan + ATP = L-tryptophyl-tRNA(Trp) + AMP + diphosphate + H(+). Its function is as follows. Catalyzes the attachment of tryptophan to tRNA(Trp). In Rhizobium meliloti (strain 1021) (Ensifer meliloti), this protein is Tryptophan--tRNA ligase.